The chain runs to 165 residues: MEMFQGLLLLLLLSMGGTWASKEPLRPRCRPINATLAVEKEGCPVCITVNTTICAGYCPTMTRVLQGVLPALPQVVCNYRDVRFESIRLPGCPRGVNPVVSYAVALSCQCALCRRSTTDCGGPKDHPLTCDDPRFQDSSSSKAPPPSLPSPSRLPGPSDTPILPQ.

Residues 1–20 (MEMFQGLLLLLLLSMGGTWA) form the signal peptide. Disulfide bonds link cysteine 29–cysteine 77, cysteine 43–cysteine 92, cysteine 46–cysteine 130, cysteine 54–cysteine 108, cysteine 58–cysteine 110, and cysteine 113–cysteine 120. N-linked (GlcNAc...) asparagine glycosylation is found at asparagine 33 and asparagine 50. The segment at 131–165 (DDPRFQDSSSSKAPPPSLPSPSRLPGPSDTPILPQ) is disordered. Residues serine 141, serine 147, serine 152, and serine 158 are each glycosylated (O-linked (GalNAc...) serine). Residues 143–154 (APPPSLPSPSRL) show a composition bias toward pro residues.

Belongs to the glycoprotein hormones subunit beta family. Heterodimer of a common alpha chain identical in LH, FSH, TSH and HCG and a unique beta chain distinct in each of the hormones. In terms of tissue distribution, high expression in the placenta throughout pregnancy.

Its subcellular location is the secreted. In terms of biological role, beta subunit of the human chorionic gonadotropin (hCG). hCG is a complex glycoprotein composed of two glycosylated subunits alpha and beta which are non-covalently associated. The alpha subunit is identical to those in the pituitary gonadotropin hormones (LH, FSH and TSH). The beta subunits are distinct in each of the hormones and confer receptor and biological specificity. Has an essential role in pregnancy and maternal adaptation. Stimulates the ovaries to synthesize the steroids that are essential for the maintenance of pregnancy. The sequence is that of Choriogonadotropin subunit beta 3 (CGB3) from Homo sapiens (Human).